Consider the following 1494-residue polypeptide: MSLLGTINPNLNPARAVGAQGDAEGAAPVSGGEPMPIFEGNDSARTSDTALDKLGKDESKYDEQIAEAEVTRLAQQLTRQSTRFSVSQNAENPFLETKEDSTLNPLGPNFKAKNWMKNLLALTSRDPERHPRREAGVSFRNLSVHGYGSPTDYQKDVFNMVLQVGALFRAVTGTGKQKIQILRDFDGLVKSGEMLVVLGRPGSGCSTFLKTLAGEMNGIYMDDKSDLNYQGIPAKQMRRQFRGEAIYNAETDVHFPQLSVGDTLKFAALTRCPRNRFPGVSREQYATHMRDVVMAMLGLTHTINTRVGNDFVRGVSGGERKRVSIAEATLSGSPLQCWDNSTRGLDSANALEFCKTLNLMTKYAGATVAVAIYQASQSAYDVFDKVTVLYEGRQIYFGRTDEAKEFFTTMGFECPERQTTADFLTSLTSPSERIVKKGYEGKVPRTPDEFAAAWKNSEAYAKLIREIEEYNREFPLGGESVQKFVESRRAMQAKNQRVGSPYTVSIYEQVRLCMIRGFQRLKGDSSLTMSQLIGNFIMALIIGSVFYNLQHDTSSFYSRGALLFFAVLLNAFSSALEILTLYAQRPIVEKQARYAMYHPFAEAIASMLCDMPYKITNAIIFNITLYFMTNLRREPGPFFVFLLFTFVTTMTMSMLFRTIAASSRTLSQALVPAAILILGLVIYTGFTIPTRNMLGWSRWMNYLDPIAYGFESLMVNEFHNTKWKCSSAELIPNYEGASLANKICSTVGAVAGSEYVYGDDYLEQSFQYYESHKWRNLGIMFAFMVFFLATYLTATEYISEAKSKGEVLLFRRGHYSRGAADVETHNEVSATEKTNESSDGAGAAIQRQEAIFHWQDVCYDIKIKGEPRRILDHVDGWVKPGTCTALMGVSGAGKTTLLDVLATRVTMGVVTGEMLVDGRLRDQSFQRKTGYVQQQDLHLHTTTVREALRFSAILRQPAHVSRQEKLDYVEEVIKLLGMEAYADAVVGVPGEGLNVEQRKRLTIGVELAAKPQLLLFLDEPTSGLDSQTSWSILDLIDTLTKHGQAILCTIHQPSAMLFQRFDRLLFLAKGGKTVYFGEIGERSSTLASYFERNGAPKLPVEANPAEWMLEVIGAAPGSHSDIDWPAVWRESPEREAVRNHLAELKSTLSQKSVDSSHSDESSFKEFAAPFSVQLYECLVRVFSQYWRTPVYIYSKAVLCILTSLYIGFSFFHAENSRQGLQNQMFSIFMLMTIFGNLVQQIMPNFVTQRALYEARERPSKAYSWKAFMTANILVELPWNALMSVIIFVCWYYPIGLYRNAEPTDSVHERGALMWLLILSFLLFTSTFAHMMIAGIELAETGGNLANLLFSLCLIFCGVLATPETLPGFWIFMYRVSPFTYLVSGMLATGVGRTTAVCEKVEFLHLTPPANTTCYDYMSDYIGSFGGYLENDNATDSCSFCQISSTDTFLSAVSSYYEDRWRNFGIMWAFIVFNIAAAVFIYWLARVPKGSRSKN.

Residues 1–11 (MSLLGTINPNL) show a composition bias toward polar residues. Disordered stretches follow at residues 1–48 (MSLL…RTSD) and 84–105 (FSVS…TLNP). The N-linked (GlcNAc...) asparagine glycan is linked to asparagine 41. Residues asparagine 141 and asparagine 340 are each glycosylated (N-linked (GlcNAc...) asparagine). Positions 162 to 416 (LQVGALFRAV…FTTMGFECPE (255 aa)) constitute an ABC transporter 1 domain. 2 consecutive transmembrane segments (helical) span residues 527 to 547 (LTMS…SVFY) and 561 to 581 (ALLF…ILTL). N-linked (GlcNAc...) asparagine glycosylation is present at asparagine 622. 3 consecutive transmembrane segments (helical) span residues 636-656 (GPFF…SMLF), 669-689 (ALVP…FTIP), and 778-798 (GIMF…TEYI). A glycan (N-linked (GlcNAc...) asparagine) is linked at asparagine 835. An ABC transporter 2 domain is found at 852 to 1095 (FHWQDVCYDI…LASYFERNGA (244 aa)). An ATP-binding site is contributed by 888–895 (GVSGAGKT). The next 5 helical transmembrane spans lie at 1191 to 1211 (YIYS…FSFF), 1227 to 1247 (IFML…NFVT), 1276 to 1296 (LPWN…PIGL), 1312 to 1332 (LMWL…HMMI), and 1351 to 1371 (LCLI…FWIF). N-linked (GlcNAc...) asparagine glycans are attached at residues asparagine 1410 and asparagine 1432. The chain crosses the membrane as a helical span at residues 1463–1483 (FGIMWAFIVFNIAAAVFIYWL).

This sequence belongs to the ABC transporter superfamily. ABCG family. PDR (TC 3.A.1.205) subfamily.

Its subcellular location is the cell membrane. It catalyses the reaction (R)-miconazole(in) + ATP + H2O = (R)-miconazole(out) + ADP + phosphate + H(+). Its function is as follows. Pleiotropic ABC efflux transporter involved in the basal level of azole susceptibility. Confers resistance to miconazole and clotrimazole. This Aspergillus oryzae (strain ATCC 42149 / RIB 40) (Yellow koji mold) protein is ABC multidrug transporter atrG.